A 2556-amino-acid chain; its full sequence is Ubiquitin carboxyl-terminal hydrolase 9Y (2556 aa).

Residues 1-33 (MTITTRGSPVGENESQGQTSDGQPQPSFQQNQI) are compositionally biased toward polar residues. The tract at residues 1–68 (MTITTRGSPV…QHEEEDPSFP (68 aa)) is disordered. A compositionally biased stretch (low complexity) spans 34-44 (SSSDSSNETSP). Ser587 carries the phosphoserine modification. Position 589 is a phosphothreonine (Thr589). The disordered stretch occupies residues 971 to 999 (NMPSSPDSSSDSSAGPPGNHSHNNYRDVS). Low complexity predominate over residues 973-983 (PSSPDSSSDSS). The 400-residue stretch at 1559–1958 (VGLKNAGATC…NAYILFYERM (400 aa)) folds into the USP domain. Residue Cys1568 is the Nucleophile of the active site. Residues Cys1729, His1731, Cys1773, and Cys1776 each coordinate Zn(2+). The active-site Proton acceptor is His1881. Residue Ser2447 is modified to Phosphoserine. The tract at residues 2513 to 2556 (QNYVPEQPFSGPASHHLNNPQKNDKPQETHESNEEISSCLIKDQ) is disordered. Basic and acidic residues predominate over residues 2534–2545 (KNDKPQETHESN). Position 2549 is a phosphoserine (Ser2549).

Belongs to the peptidase C19 family.

The catalysed reaction is Thiol-dependent hydrolysis of ester, thioester, amide, peptide and isopeptide bonds formed by the C-terminal Gly of ubiquitin (a 76-residue protein attached to proteins as an intracellular targeting signal).. It functions in the pathway protein modification; protein ubiquitination. Deubiquitinase that mediates deubiquitination of target proteins. May stabilize target proteins that are important for male germ cell development. The polypeptide is Ubiquitin carboxyl-terminal hydrolase 9Y (Mus musculus (Mouse)).